A 216-amino-acid chain; its full sequence is Pyrophosphatase PpaX (216 aa).

The active-site Nucleophile is the aspartate 9.

It belongs to the HAD-like hydrolase superfamily. PpaX family. Requires Mg(2+) as cofactor.

It catalyses the reaction diphosphate + H2O = 2 phosphate + H(+). Functionally, hydrolyzes pyrophosphate formed during P-Ser-HPr dephosphorylation by HPrK/P. Might play a role in controlling the intracellular pyrophosphate pool. The chain is Pyrophosphatase PpaX from Bacillus thuringiensis (strain Al Hakam).